We begin with the raw amino-acid sequence, 322 residues long: Cytochrome f (322 aa).

The signal sequence occupies residues 1–37; the sequence is MQNRKTYAYDWIKKWMIKSISTLIIINTMVWSSVSEA. Residues Tyr-38, Cys-58, Cys-61, and His-62 each contribute to the heme site. The helical transmembrane segment at 285–307 threads the bilayer; the sequence is VLRVQGLLLFFASVILAQIFLVL.

It belongs to the cytochrome f family. In terms of assembly, the 4 large subunits of the cytochrome b6-f complex are cytochrome b6, subunit IV (17 kDa polypeptide, petD), cytochrome f and the Rieske protein, while the 4 small subunits are PetG, PetL, PetM and PetN. The complex functions as a dimer. The cofactor is heme.

The protein resides in the plastid. The protein localises to the chloroplast thylakoid membrane. Its function is as follows. Component of the cytochrome b6-f complex, which mediates electron transfer between photosystem II (PSII) and photosystem I (PSI), cyclic electron flow around PSI, and state transitions. In Anthoceros angustus (Hornwort), this protein is Cytochrome f (petA).